A 157-amino-acid chain; its full sequence is UPF0756 membrane protein BH3161 (157 aa).

4 helical membrane-spanning segments follow: residues M1–N21, L54–F74, W87–L107, and L117–I137.

Belongs to the UPF0756 family.

It localises to the cell membrane. This Halalkalibacterium halodurans (strain ATCC BAA-125 / DSM 18197 / FERM 7344 / JCM 9153 / C-125) (Bacillus halodurans) protein is UPF0756 membrane protein BH3161.